Reading from the N-terminus, the 804-residue chain is E3 ubiquitin-protein ligase RNF10 (804 aa).

3 stretches are compositionally biased toward low complexity: residues 1–31, 78–90, and 104–113; these read MPQS…SGSS, SNQS…QKSK, and SKPFSSSSNG. Positions 1 to 134 are disordered; sequence MPQSSPSAAA…AEFSPAQFSG (134 aa). Residue S5 is modified to Phosphoserine. At S110 the chain carries Phosphoserine. The span at 114–124 shows a compositional bias: basic and acidic residues; sequence GRRDEVAEAQR. Position 128 is a phosphoserine (S128). The segment at 225-267 adopts an RING-type zinc-finger fold; sequence CPICLYPPTAAKITRCGHIFCWACILHYLSLSEKTWSKCPICY. Disordered stretches follow at residues 589 to 611, 646 to 665, and 715 to 804; these read DIEK…ERRI, DSAL…LSPL, and KADG…VHTK. Over residues 601 to 611 the composition is skewed to basic and acidic residues; the sequence is AREERRRERRI. A compositionally biased stretch (polar residues) spans 646–655; sequence DSALGPTSTE. Positions 715–729 are enriched in basic and acidic residues; the sequence is KADGWPKTAPKKDDN. Polar residues predominate over residues 795–804; it reads LFSTSVVHTK.

This sequence belongs to the RNF10 family. Interacts with MEOX2.

The protein resides in the cytoplasm. It localises to the nucleus. It catalyses the reaction S-ubiquitinyl-[E2 ubiquitin-conjugating enzyme]-L-cysteine + [acceptor protein]-L-lysine = [E2 ubiquitin-conjugating enzyme]-L-cysteine + N(6)-ubiquitinyl-[acceptor protein]-L-lysine.. It functions in the pathway protein modification; protein ubiquitination. Functionally, E3 ubiquitin-protein ligase that catalyzes monoubiquitination of 40S ribosomal proteins RPS2/us5 and RPS3/us3 in response to ribosome stalling. Part of a ribosome quality control that takes place when ribosomes have stalled during translation initiation (iRQC): RNF10 acts by mediating monoubiquitination of RPS2/us5 and RPS3/us3, promoting their degradation by the proteasome. Also promotes ubiquitination of 40S ribosomal proteins in response to ribosome stalling during translation elongation. The action of RNF10 in iRQC is counteracted by USP10. May also act as a transcriptional factor involved in the regulation of MAG (Myelin-associated glycoprotein) expression. Acts as a regulator of Schwann cell differentiation and myelination. In Mus musculus (Mouse), this protein is E3 ubiquitin-protein ligase RNF10.